The chain runs to 113 residues: Large ribosomal subunit protein uL22 (113 aa).

Belongs to the universal ribosomal protein uL22 family. Part of the 50S ribosomal subunit.

In terms of biological role, this protein binds specifically to 23S rRNA; its binding is stimulated by other ribosomal proteins, e.g. L4, L17, and L20. It is important during the early stages of 50S assembly. It makes multiple contacts with different domains of the 23S rRNA in the assembled 50S subunit and ribosome. Functionally, the globular domain of the protein is located near the polypeptide exit tunnel on the outside of the subunit, while an extended beta-hairpin is found that lines the wall of the exit tunnel in the center of the 70S ribosome. The protein is Large ribosomal subunit protein uL22 of Opitutus terrae (strain DSM 11246 / JCM 15787 / PB90-1).